The following is a 324-amino-acid chain: UDP-N-acetylenolpyruvoylglucosamine reductase (324 aa).

The FAD-binding PCMH-type domain maps to 36 to 203; it reads FRAGGLAELM…TSVLFEGYPE (168 aa). The active site involves Arg183. Ser232 functions as the Proton donor in the catalytic mechanism. Residue Glu302 is part of the active site.

It belongs to the MurB family. The cofactor is FAD.

The protein resides in the cytoplasm. It carries out the reaction UDP-N-acetyl-alpha-D-muramate + NADP(+) = UDP-N-acetyl-3-O-(1-carboxyvinyl)-alpha-D-glucosamine + NADPH + H(+). It participates in cell wall biogenesis; peptidoglycan biosynthesis. Its function is as follows. Cell wall formation. The sequence is that of UDP-N-acetylenolpyruvoylglucosamine reductase from Rhizobium johnstonii (strain DSM 114642 / LMG 32736 / 3841) (Rhizobium leguminosarum bv. viciae).